Consider the following 113-residue polypeptide: Nucleoid-associated protein Synpcc7942_0464 (113 aa).

Belongs to the YbaB/EbfC family. As to quaternary structure, homodimer.

It is found in the cytoplasm. Its subcellular location is the nucleoid. In terms of biological role, binds to DNA and alters its conformation. May be involved in regulation of gene expression, nucleoid organization and DNA protection. The protein is Nucleoid-associated protein Synpcc7942_0464 of Synechococcus elongatus (strain ATCC 33912 / PCC 7942 / FACHB-805) (Anacystis nidulans R2).